Reading from the N-terminus, the 170-residue chain is MQNTIRIIGIDPGLRRTGWGVIETLGNSLRFVASGTVTSDGELDLASRLCQLHDGLAEVVHGYQPHEAAVEQTFVNKDATATLKLGQARGIAMLVPARAGLRVAEYAPNAVKKAVIGVGHGEKQQIHMMLKVLMPKAEFKGNDAADALAIAICHAHNRQAVTSRLAALAG.

Active-site residues include Asp-11, Glu-71, and Asp-143. Mg(2+) contacts are provided by Asp-11, Glu-71, and Asp-143.

It belongs to the RuvC family. Homodimer which binds Holliday junction (HJ) DNA. The HJ becomes 2-fold symmetrical on binding to RuvC with unstacked arms; it has a different conformation from HJ DNA in complex with RuvA. In the full resolvosome a probable DNA-RuvA(4)-RuvB(12)-RuvC(2) complex forms which resolves the HJ. Requires Mg(2+) as cofactor.

The protein resides in the cytoplasm. It catalyses the reaction Endonucleolytic cleavage at a junction such as a reciprocal single-stranded crossover between two homologous DNA duplexes (Holliday junction).. Functionally, the RuvA-RuvB-RuvC complex processes Holliday junction (HJ) DNA during genetic recombination and DNA repair. Endonuclease that resolves HJ intermediates. Cleaves cruciform DNA by making single-stranded nicks across the HJ at symmetrical positions within the homologous arms, yielding a 5'-phosphate and a 3'-hydroxyl group; requires a central core of homology in the junction. The consensus cleavage sequence is 5'-(A/T)TT(C/G)-3'. Cleavage occurs on the 3'-side of the TT dinucleotide at the point of strand exchange. HJ branch migration catalyzed by RuvA-RuvB allows RuvC to scan DNA until it finds its consensus sequence, where it cleaves and resolves the cruciform DNA. The protein is Crossover junction endodeoxyribonuclease RuvC of Rhizobium meliloti (strain 1021) (Ensifer meliloti).